A 509-amino-acid polypeptide reads, in one-letter code: Cytochrome P450 monooxygenase CYP512U6 (509 aa).

The chain crosses the membrane as a helical span at residues 12–29; the sequence is VFACVAVVIAIYAVRWYT. C446 contacts heme.

The protein belongs to the cytochrome P450 family. Heme serves as cofactor.

It localises to the membrane. It carries out the reaction ganoderate DM + reduced [NADPH--hemoprotein reductase] + O2 = hainanate A + oxidized [NADPH--hemoprotein reductase] + H2O + H(+). The enzyme catalyses ganoderate TR + reduced [NADPH--hemoprotein reductase] + O2 = ganoderate Jc + oxidized [NADPH--hemoprotein reductase] + H2O + H(+). It participates in secondary metabolite biosynthesis; terpenoid biosynthesis. Cytochrome P450 monooxygenase that hydroxylates the ganoderic acids DM and TR at the C-23 position to produce hainanic acid A and ganoderic acid Jc, respectively. This is Cytochrome P450 monooxygenase CYP512U6 from Ganoderma lucidum (Ling zhi medicinal fungus).